We begin with the raw amino-acid sequence, 169 residues long: MHTSIYANRSTSFSPSAGNDTQNTFGRVSTGMISEVVYREDQPLMTQLLLLPLLQQLGQQSRWQLWLTPKQKLSREWVQSAGLPLAKVMQISQIAPCHTVDSMIRALRTGNYSVVIGWLSEELTEDEHFRLVEAAEEGNAIGLIMRPVNPDSLGRGHLSGLKIHSNLYH.

The interval 1 to 22 (MHTSIYANRSTSFSPSAGNDTQ) is disordered. The tract at residues 106 to 112 (ALRTGNY) is ftsZ binding. The lon protease binding stretch occupies residues 162 to 169 (KIHSNLYH).

This sequence belongs to the SulA family. Interacts with FtsZ. Post-translationally, is rapidly cleaved and degraded by the Lon protease once DNA damage is repaired.

In terms of biological role, component of the SOS system and an inhibitor of cell division. Accumulation of SulA causes rapid cessation of cell division and the appearance of long, non-septate filaments. In the presence of GTP, binds a polymerization-competent form of FtsZ in a 1:1 ratio, thus inhibiting FtsZ polymerization and therefore preventing it from participating in the assembly of the Z ring. This mechanism prevents the premature segregation of damaged DNA to daughter cells during cell division. In Enterobacter sp. (strain 638), this protein is Cell division inhibitor SulA.